The sequence spans 417 residues: Exodeoxyribonuclease 7 large subunit (417 aa).

It belongs to the XseA family. In terms of assembly, heterooligomer composed of large and small subunits.

The protein resides in the cytoplasm. The enzyme catalyses Exonucleolytic cleavage in either 5'- to 3'- or 3'- to 5'-direction to yield nucleoside 5'-phosphates.. Bidirectionally degrades single-stranded DNA into large acid-insoluble oligonucleotides, which are then degraded further into small acid-soluble oligonucleotides. This chain is Exodeoxyribonuclease 7 large subunit, found in Lactococcus lactis subsp. cremoris (strain MG1363).